Consider the following 547-residue polypeptide: Auxin transporter-like protein 3 (547 aa).

Residues 1 to 74 (MASGSSGGGY…DAWFSCASNQ (74 aa)) lie on the Cytoplasmic side of the membrane. Residues 75–92 (VAQVLLTLPYSFAQLGMA) form a helical membrane-spanning segment. Over 93–94 (SG) the chain is Extracellular. The helical transmembrane segment at 95-115 (LLFQLFYGLLGSWTAYLISIL) threads the bilayer. The Cytoplasmic segment spans residues 116–151 (YLEYRTRKERDKVDFRNHVIQWFEVLDGLLGRHWRN). Residues 152–172 (VGLAFNCTFLLFGSVIQLIGC) form a helical membrane-spanning segment. The Extracellular portion of the chain corresponds to 173 to 187 (ASNIYYINDHLDKRT). Residues 188–208 (WTYIFGACCATTVFIPSFHNY) traverse the membrane as a helical segment. Over 209 to 211 (RIW) the chain is Cytoplasmic. A helical membrane pass occupies residues 212–232 (SFLGLLMTTYTAWYIAVASLI). Topologically, residues 233–247 (HGQVEGVAHSGPTSI) are extracellular. The helical transmembrane segment at 248–268 (VLYFTGATNILYTFGGHAVTV) threads the bilayer. At 269–281 (EIMHAMWRPQKFK) the chain is on the cytoplasmic side. The chain crosses the membrane as a helical span at residues 282–302 (AIYLLATVYVLTLTLPSASAA). Topologically, residues 303-329 (YWAFGDALLTHSNALALLPRTPWRDAA) are extracellular. The helical transmembrane segment at 330–350 (VVLMLIHQFITFGFACTPLYF) threads the bilayer. The Cytoplasmic portion of the chain corresponds to 351–371 (VWEKLVGLHGCPSLCKRAAAR). A helical membrane pass occupies residues 372-392 (LPVVLPIWFLAIIFPFFGPIN). A topological domain (extracellular) is located at residue S393. A helical transmembrane segment spans residues 394 to 414 (AVGSLLVSFTVYIIPSLAYMV). The Cytoplasmic segment spans residues 415–440 (TFRSPQSRQNAVERPPRFAGGWTGAY). A helical membrane pass occupies residues 441–461 (VINSFVVAWVLVVGFGFGGWA). Over 462–547 (SITNFVHQVD…HHHRHHRHGL (86 aa)) the chain is Extracellular. A glycan (N-linked (GlcNAc...) asparagine) is linked at N509.

It belongs to the amino acid/polyamine transporter 2 family. Amino acid/auxin permease (AAAP) (TC 2.A.18.1) subfamily.

It is found in the cell membrane. Carrier protein involved in proton-driven auxin influx. May mediate the formation of auxin gradient from developing leaves (site of auxin biosynthesis) to tips. The chain is Auxin transporter-like protein 3 from Oryza sativa subsp. japonica (Rice).